The following is a 512-amino-acid chain: MQLNPAEISELIKSRIEGLGAATDVRNQGTVVSVTDGIVRVHGLSDAMAGEMLEFPGNVFGLALNLERDSVGAVILGEYEGISEGDTVRCTGRILEVPVGPELIGRVVNALGQPIDGKGPINAKMTDVIEKVAPGVIARKSVDQPVQTGLKSIDSMVPIGRGQRELIIGDRQTGKTAVAIDAIINQKGQNMTCVYVAIGQKASSIKNVVRALEQAGAMEYTIVVAASASESAAMQYISAYTGCTMGEYFRDRGEDALIVYDDLSKQAVAYRQVSLLLRRPPGREAFPGDVFYLHSRLLERAARVNADYVEAFTKGAVKGKTGSLTALPVIETQAGDVSAFVPTNVISITDGQIFLETSLFNAGIRPAINAGISVSRVGGAAQTKLIKGLSGGIRTDLAQYRELAAFAQFASDLDASTRKQLDRGARVTELLKQAQYSPQPISLMGATLYAVNKGYLDDIEVKKVLAFESGMHQYLKTSHAALLQKLETTKALDKDAEAELQGAIAAFKKSFA.

169 to 176 (GDRQTGKT) contacts ATP.

The protein belongs to the ATPase alpha/beta chains family. F-type ATPases have 2 components, CF(1) - the catalytic core - and CF(0) - the membrane proton channel. CF(1) has five subunits: alpha(3), beta(3), gamma(1), delta(1), epsilon(1). CF(0) has three main subunits: a(1), b(2) and c(9-12). The alpha and beta chains form an alternating ring which encloses part of the gamma chain. CF(1) is attached to CF(0) by a central stalk formed by the gamma and epsilon chains, while a peripheral stalk is formed by the delta and b chains.

It is found in the cell inner membrane. The enzyme catalyses ATP + H2O + 4 H(+)(in) = ADP + phosphate + 5 H(+)(out). Functionally, produces ATP from ADP in the presence of a proton gradient across the membrane. The alpha chain is a regulatory subunit. This is ATP synthase subunit alpha from Leptothrix cholodnii (strain ATCC 51168 / LMG 8142 / SP-6) (Leptothrix discophora (strain SP-6)).